The chain runs to 326 residues: Ficolin-1 (326 aa).

Positions 1 to 29 are cleaved as a signal peptide; that stretch reads MELSRVAVALGPTGQLLLFLSFQTLAAQA. The Collagen-like domain maps to 55-93; sequence GLPGAAGPKGEAGANGPKGERGSPGVVGKAGPAGPKGDR. Low complexity-rich tracts occupy residues 61-71 and 78-89; these read GPKGEAGANGP and PGVVGKAGPAGP. The tract at residues 61-110 is disordered; the sequence is GPKGEAGANGPKGERGSPGVVGKAGPAGPKGDRGEKGARGEKGEPGQLQS. The span at 90–104 shows a compositional bias: basic and acidic residues; the sequence is KGDRGEKGARGEKGE. One can recognise a Fibrinogen C-terminal domain in the interval 109 to 326; it reads QSCATGPRTC…QVSEMKVRLT (218 aa). 2 disulfides stabilise this stretch: Cys-111/Cys-139 and Cys-118/Cys-146. Positions 115–154 are a domain; contributes to trimerization; it reads PRTCKELLTRGHFLSGWHTIYLPDCQPLTVLCDMDTDGGG. The segment at 155 to 243 is b domain; contributes to trimerization; sequence WTVFQRRSDG…LVLGGFLEGN (89 aa). Asp-262 and Asp-264 together coordinate Ca(2+). N-linked (GlcNAc...) asparagine glycosylation occurs at Asn-265. Cys-270 and Cys-283 form a disulfide bridge. A carbohydrate is bound at residue 282-284; it reads ACH. N-linked (GlcNAc...) asparagine glycosylation occurs at Asn-313. A p domain region spans residues 317-326; sequence QVSEMKVRLT.

Belongs to the ficolin lectin family. As to quaternary structure, homotrimer. Interacts with elastin/ELN. Interacts (via Fibrinogen C-terminal domain) with FFAR2. Interacts with CRP; may regulate monocyte activation by FCN1. In terms of tissue distribution, most abundantly expressed in placenta and lung.

Its subcellular location is the secreted. The protein resides in the cell membrane. In terms of biological role, extracellular lectin functioning as a pattern-recognition receptor in innate immunity. Binds the sugar moieties of pathogen-associated molecular patterns (PAMPs) displayed on microbes and activates the lectin pathway of the complement system. May also activate monocytes through a G protein-coupled receptor, FFAR2, inducing the secretion of interleukin-8/IL-8. Binds preferentially to 9-O-acetylated 2-6-linked sialic acid derivatives and to various glycans containing sialic acid engaged in a 2-3 linkage. This is Ficolin-1 (FCN1) from Sus scrofa (Pig).